A 770-amino-acid polypeptide reads, in one-letter code: Pheromone-regulated membrane protein 10 (770 aa).

Disordered stretches follow at residues 1–125 (MDGR…DGDD) and 139–169 (NQGG…RNEE). 2 stretches are compositionally biased toward polar residues: residues 49–63 (SGKS…NNDN) and 78–93 (DLSS…SKGT). Residues 155-169 (ENGKDDIEKNNRNEE) show a composition bias toward basic and acidic residues. 10 helical membrane passes run 453–473 (WMCV…AFGG), 475–495 (WVNL…QFIL), 505–525 (VFEI…GSIP), 529–549 (ICFG…YIIL), 568–588 (FYAI…SALF), 604–624 (LISP…ISLL), 629–649 (ISQL…TYWA), 659–679 (FTAA…SRIW), 681–701 (GLAV…GIAS), and 740–760 (IQVC…VYPF).

It belongs to the ThrE exporter (TC 2.A.79) family.

It is found in the membrane. This chain is Pheromone-regulated membrane protein 10 (PRM10), found in Saccharomyces cerevisiae (strain YJM789) (Baker's yeast).